We begin with the raw amino-acid sequence, 214 residues long: Probable nicotinate-nucleotide adenylyltransferase (214 aa).

The protein belongs to the NadD family.

The enzyme catalyses nicotinate beta-D-ribonucleotide + ATP + H(+) = deamido-NAD(+) + diphosphate. The protein operates within cofactor biosynthesis; NAD(+) biosynthesis; deamido-NAD(+) from nicotinate D-ribonucleotide: step 1/1. In terms of biological role, catalyzes the reversible adenylation of nicotinate mononucleotide (NaMN) to nicotinic acid adenine dinucleotide (NaAD). The protein is Probable nicotinate-nucleotide adenylyltransferase of Pseudomonas paraeruginosa (strain DSM 24068 / PA7) (Pseudomonas aeruginosa (strain PA7)).